Here is a 279-residue protein sequence, read N- to C-terminus: Proteasome subunit beta (279 aa).

A propeptide spans 1-56 (MASQAMSWRGEGERVVRDLAAASTSSFVEHLSQSRPDLLPFGQALPAGVLPQTPHA) (removed in mature form; by autocatalysis). Residue T57 is the Nucleophile of the active site.

The protein belongs to the peptidase T1B family. In terms of assembly, the 20S proteasome core is composed of 14 alpha and 14 beta subunits that assemble into four stacked heptameric rings, resulting in a barrel-shaped structure. The two inner rings, each composed of seven catalytic beta subunits, are sandwiched by two outer rings, each composed of seven alpha subunits. The catalytic chamber with the active sites is on the inside of the barrel. Has a gated structure, the ends of the cylinder being occluded by the N-termini of the alpha-subunits. Is capped by the proteasome-associated ATPase, ARC.

It localises to the cytoplasm. It catalyses the reaction Cleavage of peptide bonds with very broad specificity.. It functions in the pathway protein degradation; proteasomal Pup-dependent pathway. Its activity is regulated as follows. The formation of the proteasomal ATPase ARC-20S proteasome complex, likely via the docking of the C-termini of ARC into the intersubunit pockets in the alpha-rings, may trigger opening of the gate for substrate entry. Interconversion between the open-gate and close-gate conformations leads to a dynamic regulation of the 20S proteasome proteolysis activity. Component of the proteasome core, a large protease complex with broad specificity involved in protein degradation. In Renibacterium salmoninarum (strain ATCC 33209 / DSM 20767 / JCM 11484 / NBRC 15589 / NCIMB 2235), this protein is Proteasome subunit beta.